A 67-amino-acid chain; its full sequence is Bombesin (67 aa).

The first 30 residues, 1–30 (MSLLPAVKVLPLGYLGIVLVFSLILRSAMV), serve as a signal peptide directing secretion. Positions 31–49 (DFIQDAGKLERIDTYKREA) are excised as a propeptide. Gln50 is modified (pyrrolidone carboxylic acid). Met64 carries the methionine amide modification.

This sequence belongs to the bombesin/neuromedin-B/ranatensin family. In terms of tissue distribution, expressed by the skin dorsal glands.

The protein resides in the secreted. In terms of biological role, stimulates smooth muscle contraction in isolated rat stomach strip. This Sanguirana varians (Palawan frog) protein is Bombesin.